We begin with the raw amino-acid sequence, 210 residues long: DNA-directed RNA polymerases I, II, and III subunit RPABC1 (210 aa).

At methionine 1 the chain carries N-acetylmethionine. Lysine 81 is covalently cross-linked (Glycyl lysine isopeptide (Lys-Gly) (interchain with G-Cter in SUMO2)).

This sequence belongs to the archaeal Rpo5/eukaryotic RPB5 RNA polymerase subunit family. Component of the RNA polymerase I (Pol I), RNA polymerase II (Pol II) and RNA polymerase III (Pol III) complexes consisting of at least 13, 12 and 17 subunits, respectively. Pol I complex consists of a ten-subunit catalytic core composed of POLR1A/RPA1, POLR1B/RPA2, POLR1C/RPAC1, POLR1D/RPAC2, POLR1H/RPA12, POLR2E/RPABC1, POLR2F/RPABC2, POLR2H/RPABC3, POLR2K/RPABC4 and POLR2L/RPABC5; a mobile stalk subunit POLR1F/RPA43 protruding from the core and additional subunits homologous to general transcription factors POLR1E/RPA49 and POLR1G/RPA34. Part of Pol I pre-initiation complex (PIC), in which Pol I core assembles with RRN3 and promoter-bound UTBF and SL1/TIF-IB complex. Pol II complex contains a ten-subunit catalytic core composed of POLR2A/RPB1, POLR2B/RPB2, POLR2C/RPB3, POLR2I/RPB9, POLR2J/RPB11, POLR2E/RPABC1, POLR2F/RPABC2, POLR2H/RPABC3, POLR2K/RPABC4 and POLR2L/RPABC5 and a mobile stalk composed of two subunits POLR2D/RPB4 and POLR2G/RPB7. Part of Pol II(G) complex, in which Pol II core associates with an additional subunit POLR2M; unlike conventional Pol II, Pol II(G) functions as a transcriptional repressor. Part of TBP-based Pol II pre-initiation complex (PIC), in which Pol II core assembles with general transcription factors and other specific initiation factors including GTF2E1, GTF2E2, GTF2F1, GTF2F2, TCEA1, ERCC2, ERCC3, GTF2H2, GTF2H3, GTF2H4, GTF2H5, GTF2A1, GTF2A2, GTF2B and TBP; this large multi-subunit PIC complex mediates DNA unwinding and targets Pol II core to the transcription start site where the first phosphodiester bond forms. In Pol II complex, this subunit is present in 2-fold molar excess over the other subunits. Pol III complex consists of a ten-subunit catalytic core composed of POLR3A/RPC1, POLR3B/RPC2, POLR1C/RPAC1, POLR1D/RPAC2, POLR3K/RPC10, POLR2E/RPABC1, POLR2F/RPABC2, POLR2H/RPABC3, POLR2K/RPABC4 and POLR2L/RPABC5; a mobile stalk composed of two subunits POLR3H/RPC8 and CRCP/RPC9, protruding from the core and functioning primarily in transcription initiation; and additional subunits homologous to general transcription factors of the RNA polymerase II machinery, POLR3C/RPC3-POLR3F/RPC6-POLR3G/RPC7 heterotrimer required for transcription initiation and POLR3D/RPC4-POLR3E/RPC5 heterodimer involved in both transcription initiation and termination. Component of the PAQosome complex which is responsible for the biogenesis of several protein complexes and which consists of R2TP complex members RUVBL1, RUVBL2, RPAP3 and PIH1D1, URI complex members PFDN2, PFDN6, PDRG1, UXT and URI1 as well as ASDURF, POLR2E and DNAAF10/WDR92. Interacts with URI1.

It localises to the nucleus. Its subcellular location is the nucleolus. Its function is as follows. DNA-dependent RNA polymerase catalyzes the transcription of DNA into RNA using the four ribonucleoside triphosphates as substrates. Common component of RNA polymerases I, II and III which synthesize ribosomal RNA precursors, mRNA precursors and many functional non-coding RNAs, and small RNAs, such as 5S rRNA and tRNAs, respectively. Pol II is the central component of the basal RNA polymerase II transcription machinery. Pols are composed of mobile elements that move relative to each other. In Pol II, POLR2E/RPABC1 is part of the lower jaw surrounding the central large cleft and thought to grab the incoming DNA template. Seems to be the major component in this process. This Pongo abelii (Sumatran orangutan) protein is DNA-directed RNA polymerases I, II, and III subunit RPABC1 (POLR2E).